The following is a 435-amino-acid chain: Polyadenylate-binding protein RBP47B (435 aa).

Polar residues predominate over residues 1–15 (MQTTNGSDSTLATSG). Disordered stretches follow at residues 1–41 (MQTT…QQWM) and 85–104 (YGSY…RGSG). Low complexity predominate over residues 29–41 (QWQQQQQQQQQWM). RRM domains lie at 108 to 188 (KTLW…WASF), 202 to 281 (LSVF…IATP), and 321 to 393 (ATIF…WGRS). Residues 392–412 (RSPNKQWRGDSGQQWNGGYSR) form a disordered region.

Belongs to the polyadenylate-binding RBP47 family. In terms of assembly, interacts with the poly(A) tail of mRNA in nucleus. As to expression, expressed at low levels in leaves, stems, flowers, and seedlings.

It localises to the nucleus. The protein localises to the cytoplasmic granule. In terms of biological role, heterogeneous nuclear ribonucleoprotein (hnRNP)-protein binding the poly(A) tail of mRNA and probably involved in some steps of pre-mRNA maturation. In Arabidopsis thaliana (Mouse-ear cress), this protein is Polyadenylate-binding protein RBP47B (RBP47B).